Here is a 205-residue protein sequence, read N- to C-terminus: Small ribosomal subunit protein uS4c (205 aa).

Residues 93–154 (MRLDNTIFRL…RTQTIALIQQ (62 aa)) form the S4 RNA-binding domain.

Belongs to the universal ribosomal protein uS4 family. Part of the 30S ribosomal subunit. Contacts protein S5. The interaction surface between S4 and S5 is involved in control of translational fidelity.

It localises to the plastid. It is found in the chloroplast. Its function is as follows. One of the primary rRNA binding proteins, it binds directly to 16S rRNA where it nucleates assembly of the body of the 30S subunit. With S5 and S12 plays an important role in translational accuracy. This is Small ribosomal subunit protein uS4c (rps4) from Chaetosphaeridium globosum (Charophycean green alga).